The following is a 348-amino-acid chain: tRNA pseudouridine synthase D (348 aa).

Residue D84 is the Nucleophile of the active site. In terms of domain architecture, TRUD spans 162–308 (GVPNYFGPQR…ARMDRRPLCL (147 aa)).

This sequence belongs to the pseudouridine synthase TruD family.

It carries out the reaction uridine(13) in tRNA = pseudouridine(13) in tRNA. In terms of biological role, responsible for synthesis of pseudouridine from uracil-13 in transfer RNAs. In Chromohalobacter salexigens (strain ATCC BAA-138 / DSM 3043 / CIP 106854 / NCIMB 13768 / 1H11), this protein is tRNA pseudouridine synthase D.